The chain runs to 281 residues: Release factor glutamine methyltransferase (281 aa).

Residues 121 to 125, aspartate 144, and asparagine 188 contribute to the S-adenosyl-L-methionine site; that span reads GSGTG. 188 to 191 is a substrate binding site; the sequence is NPPY.

This sequence belongs to the protein N5-glutamine methyltransferase family. PrmC subfamily.

The enzyme catalyses L-glutaminyl-[peptide chain release factor] + S-adenosyl-L-methionine = N(5)-methyl-L-glutaminyl-[peptide chain release factor] + S-adenosyl-L-homocysteine + H(+). In terms of biological role, methylates the class 1 translation termination release factors RF1/PrfA and RF2/PrfB on the glutamine residue of the universally conserved GGQ motif. The protein is Release factor glutamine methyltransferase of Aquifex aeolicus (strain VF5).